A 378-amino-acid chain; its full sequence is Chorismate synthase (378 aa).

R49 provides a ligand contact to NADP(+). Residues 126 to 128 (RAS), G287, 302 to 306 (KPTAT), and R328 each bind FMN.

Belongs to the chorismate synthase family. Homotetramer. FMNH2 is required as a cofactor.

It carries out the reaction 5-O-(1-carboxyvinyl)-3-phosphoshikimate = chorismate + phosphate. It participates in metabolic intermediate biosynthesis; chorismate biosynthesis; chorismate from D-erythrose 4-phosphate and phosphoenolpyruvate: step 7/7. In terms of biological role, catalyzes the anti-1,4-elimination of the C-3 phosphate and the C-6 proR hydrogen from 5-enolpyruvylshikimate-3-phosphate (EPSP) to yield chorismate, which is the branch point compound that serves as the starting substrate for the three terminal pathways of aromatic amino acid biosynthesis. This reaction introduces a second double bond into the aromatic ring system. The protein is Chorismate synthase of Synechococcus sp. (strain JA-3-3Ab) (Cyanobacteria bacterium Yellowstone A-Prime).